Consider the following 399-residue polypeptide: Pre-mycofactocin synthase (399 aa).

The 383-residue stretch at 4–386 (ARDIWFETVA…VPEDILVPEG (383 aa)) folds into the FMN hydroxy acid dehydrogenase domain. S111 and Q131 together coordinate FMN. An a 2-oxocarboxylate-binding site is contributed by Y133. FMN is bound at residue T159. Residue R168 coordinates a 2-oxocarboxylate. Position 257 (K257) interacts with FMN. H281 functions as the Proton acceptor in the catalytic mechanism. Residues 312-316 (DGGIR) and 335-336 (GR) contribute to the FMN site.

This sequence belongs to the FMN-dependent alpha-hydroxy acid dehydrogenase family. It depends on FMN as a cofactor.

It catalyses the reaction 3-amino-5-[(4-hydroxyphenyl)methyl]-4,4-dimethyl-2-pyrrolidin-2-one + O2 + H2O = pre-mycofactocin + H2O2 + NH4(+). In terms of biological role, involved in the biosynthesis of the enzyme cofactor mycofactocin (MFT). Catalyzes the oxidative deamination of AHDP (3-amino-5-[(4-hydroxyphenyl)methyl]-4,4-dimethyl-2-pyrrolidin-2-one), forming an alpha-keto amide moiety on the resulting molecule, which is called pre-mycofactocin (PMFT). This reaction occurs via a 5-[(4-hydroxyphenyl)methyl]-3-imino-4,4-dimethylpyrrolidin-2-one intermediate, which converts to PMFT. The alpha-keto amide moiety is the redox-active center for the redox activity of mycofactocin. Is required for the in vivo ethanol assimilation in M.smegmatis. This is Pre-mycofactocin synthase from Mycolicibacterium smegmatis (strain ATCC 700084 / mc(2)155) (Mycobacterium smegmatis).